The following is a 546-amino-acid chain: Cysteine--tRNA ligase (546 aa).

Cysteine 57 is a binding site for Zn(2+). Residues 59 to 69 (ATVQSSPHIGH) carry the 'HIGH' region motif. The disordered stretch occupies residues 211–236 (PSVDATGADKYNPVDPADASPDKHDP). The Zn(2+) site is built by cysteine 270, histidine 295, and glutamate 299. Residues 326–330 (KMSKS) carry the 'KMSKS' region motif. Lysine 329 serves as a coordination point for ATP.

The protein belongs to the class-I aminoacyl-tRNA synthetase family. Monomer. The cofactor is Zn(2+).

It is found in the cytoplasm. It catalyses the reaction tRNA(Cys) + L-cysteine + ATP = L-cysteinyl-tRNA(Cys) + AMP + diphosphate. The protein is Cysteine--tRNA ligase of Bifidobacterium longum (strain NCC 2705).